Reading from the N-terminus, the 298-residue chain is MTIELGIAPIGWTNDDMPELGKEVTFEQAIDEMTLAGYKGTEVGNKYPKDPKTLKHFLDLRHLKIASAWFSAFLTTKPYEETEAAFIKHRDFLHAMGAKVIVVAEQGHSVQGLLDKSVFDDKPHFTDDEWERLATGLERLGDRAREVGMQIVYHHHMGTGVQTTAEIDRLMTMTDPDKVSLLFDTGHLVLSGEDPLTIFNRYQDRIKHIHFKDVRQQQADEEHKDHLSFLAGVKNGMFTVPGDGMIDFKPIWEAIQESGYDGWIIVEAEQDPAKANPFEYALKAKKYLDATMNIPQSA.

It belongs to the IolE/MocC family. Glutathione serves as cofactor. The cofactor is Co(2+). Mn(2+) is required as a cofactor.

It catalyses the reaction scyllo-inosose = 3D-3,5/4-trihydroxycyclohexane-1,2-dione + H2O. The protein operates within polyol metabolism; myo-inositol degradation into acetyl-CoA; acetyl-CoA from myo-inositol: step 2/7. Functionally, catalyzes the dehydration of inosose (2-keto-myo-inositol, 2KMI or 2,4,6/3,5-pentahydroxycyclohexanone) to 3D-(3,5/4)-trihydroxycyclohexane-1,2-dione (D-2,3-diketo-4-deoxy-epi-inositol). The protein is Inosose dehydratase of Lacticaseibacillus casei (Lactobacillus casei).